The following is a 468-amino-acid chain: Glycosyl hydrolase family 109 protein (468 aa).

Residues 1–19 form the signal peptide; the sequence is MVYKVFLSLCIGLALSASA. Residues 67–68, D89, 138–141, 158–159, and N187 contribute to the NAD(+) site; these read MR, WKTH, and EV. Residues Y216, R232, 244-247, and Y322 each bind substrate; that span reads YATH. NAD(+) is bound at residue Y244.

Belongs to the Gfo/Idh/MocA family. Glycosyl hydrolase 109 subfamily. NAD(+) is required as a cofactor.

Its function is as follows. Glycosidase. The polypeptide is Glycosyl hydrolase family 109 protein (Porphyromonas gingivalis (strain ATCC BAA-308 / W83)).